A 159-amino-acid chain; its full sequence is 17.7 kDa class I heat shock protein (159 aa).

The sHSP domain maps to 45-159; that stretch reads DAAAFAGARI…PDVKSIQISG (115 aa).

This sequence belongs to the small heat shock protein (HSP20) family. In terms of assembly, may form oligomeric structures.

The protein localises to the cytoplasm. This Oryza sativa subsp. japonica (Rice) protein is 17.7 kDa class I heat shock protein (HSP17.7).